The chain runs to 328 residues: tRNA dimethylallyltransferase (328 aa).

19–26 contacts ATP; the sequence is GPTASGKT. 21-26 contributes to the substrate binding site; that stretch reads TASGKT. Interaction with substrate tRNA stretches follow at residues 50-53, 174-178, and 257-262; these read DSAL, QRIQR, and RCVGYR.

It belongs to the IPP transferase family. In terms of assembly, monomer. It depends on Mg(2+) as a cofactor.

It carries out the reaction adenosine(37) in tRNA + dimethylallyl diphosphate = N(6)-dimethylallyladenosine(37) in tRNA + diphosphate. Catalyzes the transfer of a dimethylallyl group onto the adenine at position 37 in tRNAs that read codons beginning with uridine, leading to the formation of N6-(dimethylallyl)adenosine (i(6)A). The polypeptide is tRNA dimethylallyltransferase (Leptothrix cholodnii (strain ATCC 51168 / LMG 8142 / SP-6) (Leptothrix discophora (strain SP-6))).